The chain runs to 561 residues: Dihydroxy-acid dehydratase (561 aa).

Cys-51 is a [2Fe-2S] cluster binding site. Asp-83 contributes to the Mg(2+) binding site. Position 124 (Cys-124) interacts with [2Fe-2S] cluster. Residues Asp-125 and Lys-126 each contribute to the Mg(2+) site. Lys-126 carries the post-translational modification N6-carboxylysine. Position 196 (Cys-196) interacts with [2Fe-2S] cluster. Residue Glu-448 participates in Mg(2+) binding. Ser-474 acts as the Proton acceptor in catalysis.

The protein belongs to the IlvD/Edd family. Homodimer. The cofactor is [2Fe-2S] cluster. It depends on Mg(2+) as a cofactor.

It carries out the reaction (2R)-2,3-dihydroxy-3-methylbutanoate = 3-methyl-2-oxobutanoate + H2O. The enzyme catalyses (2R,3R)-2,3-dihydroxy-3-methylpentanoate = (S)-3-methyl-2-oxopentanoate + H2O. It functions in the pathway amino-acid biosynthesis; L-isoleucine biosynthesis; L-isoleucine from 2-oxobutanoate: step 3/4. It participates in amino-acid biosynthesis; L-valine biosynthesis; L-valine from pyruvate: step 3/4. Its function is as follows. Functions in the biosynthesis of branched-chain amino acids. Catalyzes the dehydration of (2R,3R)-2,3-dihydroxy-3-methylpentanoate (2,3-dihydroxy-3-methylvalerate) into 2-oxo-3-methylpentanoate (2-oxo-3-methylvalerate) and of (2R)-2,3-dihydroxy-3-methylbutanoate (2,3-dihydroxyisovalerate) into 2-oxo-3-methylbutanoate (2-oxoisovalerate), the penultimate precursor to L-isoleucine and L-valine, respectively. This Pyrobaculum neutrophilum (strain DSM 2338 / JCM 9278 / NBRC 100436 / V24Sta) (Thermoproteus neutrophilus) protein is Dihydroxy-acid dehydratase.